Here is a 3198-residue protein sequence, read N- to C-terminus: Helicase domino (3198 aa).

The segment covering 1-12 (MNEGNSAGGGHE) has biased composition (gly residues). Disordered stretches follow at residues 1 to 27 (MNEG…RVTP), 93 to 112 (LPQQ…APAH), and 119 to 148 (SSTI…AASI). Residues 134-143 (QRLDDNEDRT) show a composition bias toward basic and acidic residues. The stretch at 187–212 (KKRILQQKLQILRNLKERHLENVSEY) forms a coiled coil. Disordered stretches follow at residues 256-350 (TSAA…SATS) and 391-474 (GGTP…TPNS). Polar residues-rich tracts occupy residues 264–281 (QNQK…SSLV) and 297–329 (NISN…TESN). Low complexity predominate over residues 330–350 (SSTTVPGTATSGAATSTSATS). A compositionally biased stretch (polar residues) spans 391–404 (GGTPLLPCNTSAGS). Residues 452–464 (PGTPTSGSLLSPA) show a composition bias toward low complexity. The HSA domain maps to 507–579 (LPKLQEPSRP…QELQLKRVAS (73 aa)). Residues 635-848 (NKSVADTPSL…DMEEQDEQED (214 aa)) are disordered. The span at 638–650 (VADTPSLNSSRLT) shows a compositional bias: polar residues. Over residues 652–664 (PKRESDDDFRPES) the composition is skewed to basic and acidic residues. Phosphoserine occurs at positions 656, 664, and 666. Residues 666–696 (SEDDEETIAKAEEDAADVKEEVTALAKESEM) are a coiled coil. Composition is skewed to basic and acidic residues over residues 672–695 (TIAK…KESE) and 711–721 (ENRDKLMKEEQ). Phosphothreonine is present on Thr729. Residues Ser733, Ser736, and Ser744 each carry the phosphoserine modification. Residues 741 to 784 (KEASDDDENTISKQEEAEQEIDHKKEIDELEADNDLSVEQLLAK) are a coiled coil. The segment covering 753-767 (KQEEAEQEIDHKKEI) has biased composition (basic and acidic residues). Residues 805–831 (LDSDDDSTAVDSTEESEDAATEDEEDL) are compositionally biased toward acidic residues. Residue Thr838 is modified to Phosphothreonine. In terms of domain architecture, Helicase ATP-binding spans 926 to 1091 (VTMNERKLNG…WSLMHFLMPY (166 aa)). 939–946 (DEMGLGKT) provides a ligand contact to ATP. Residues 1471-1492 (VQKQSIANGKTEPEEETEAEDP) form a disordered region. The Helicase C-terminal domain maps to 1662-1812 (TMDRLLRQLK…DMAIEGGNFT (151 aa)). A disordered region spans residues 1828 to 1856 (EQSEQDESSQEKSENKDRIVATTTLSDTP). Over residues 1836–1846 (SQEKSENKDRI) the composition is skewed to basic and acidic residues. A coiled-coil region spans residues 1951 to 1996 (AAWTAEQLRAAEAELEAQKREWEANRLAAMHKEEELLKQETEAEEM). Residues 2061–2100 (KEHKRSRTDAGYDGSRRPNKMRREDNYVPPRSLFDRPTPQ) are disordered. A compositionally biased stretch (basic and acidic residues) spans 2067 to 2086 (RTDAGYDGSRRPNKMRREDN). The Myb-like domain occupies 2136-2205 (TEPEAMAEWC…QCRWRYETHI (70 aa)). Residues 2318–2362 (IREKQRGQQMSQPPVGVGVVQQMQQQSQQQQQPAPPPLPQQQQPQ) are disordered. Over residues 2325–2349 (QQMSQPPVGVGVVQQMQQQSQQQQQ) the composition is skewed to low complexity.

It belongs to the SNF2/RAD54 helicase family. SWR1 subfamily. In terms of assembly, component of the Tip60 chromatin-remodeling complex which contains Domino, Tip60, Tra1, Brd8, E(Pc), DMAP1, Pontin, Reptin, Ing3, Act87E, BAP55, Mrg15, MrgBP, Gas41 and YL-1. Isoform B is present at high levels in ovary, in follicle cells, nurse cells and oocyte. Isoform B is also present in germline and somatic stem cells from the germarium. Isoform A is undetectable in adult ovary (at protein level).

It is found in the nucleus. In terms of biological role, mediates the ATP-dependent exchange of unmodified histone H2AV for its phosphorylated and acetylated form H2AVK5acS138ph, leading to transcriptional regulation of selected genes by chromatin remodeling. Involved in Notch signaling. Represses E2F target genes. Required for somatic stem cell self-renewal but not for germline stem cell self-renewal. Involved in oogenesis. The polypeptide is Helicase domino (dom) (Drosophila melanogaster (Fruit fly)).